A 333-amino-acid chain; its full sequence is Taste receptor type 2 member 38 (333 aa).

Residues 1 to 17 (MLTLTRIHTVSYEVRST) are Extracellular-facing. The chain crosses the membrane as a helical span at residues 18–38 (FLFISVLEFAVGFLTNAFVFL). Residues 39-55 (VNFWDVVKRQPLSNSDC) lie on the Cytoplasmic side of the membrane. Residues 56-76 (VLLCLSISRLFLHGLLFLSAI) form a helical membrane-spanning segment. Over 77–94 (QLTHFQKLSEPLNHSYQA) the chain is Extracellular. Residues 95 to 115 (INMLWMIANQANLWLAACLSL) form a helical membrane-spanning segment. Over 116–142 (LYCSKLIRFSHTFLICLASWVSRKISQ) the chain is Cytoplasmic. A helical transmembrane segment spans residues 143-163 (MLLGIILCSCICTVLCVWCFF). Over 164-190 (SRPHFTVTTVLFMNNNTRLNWQIKDLN) the chain is Extracellular. N-linked (GlcNAc...) asparagine glycosylation is present at Asn178. A helical membrane pass occupies residues 191–211 (LFYSFLFCYLWSVPPFLLFLV). The Cytoplasmic segment spans residues 212–251 (SSGMLTVSLGRHMRTMKVYTRDSRDPSLEAHIKALKSLVS). The chain crosses the membrane as a helical span at residues 252–272 (FFCFFVISSCAAFISVPLLIL). At 273 to 276 (WRDK) the chain is on the extracellular side. A helical membrane pass occupies residues 277–297 (IGVMVCVGIMAACPSGHAAVL). Residues 298–333 (ISGNAKLRRAVTTILLWAQSSLKVRADHKADSRTLC) are Cytoplasmic-facing.

This sequence belongs to the G-protein coupled receptor T2R family.

The protein localises to the membrane. In terms of biological role, receptor that may play a role in the perception of bitterness and is gustducin-linked. May play a role in sensing the chemical composition of the gastrointestinal content. The activity of this receptor may stimulate alpha gustducin, mediate PLC-beta-2 activation and lead to the gating of TRPM5. The sequence is that of Taste receptor type 2 member 38 (TAS2R38) from Pan paniscus (Pygmy chimpanzee).